The sequence spans 563 residues: Pyruvate decarboxylase isozyme 2 (563 aa).

Pyruvate contacts are provided by aspartate 28, histidine 115, tyrosine 157, and arginine 224. Residues threonine 390 and 413–415 (GSI) each bind thiamine diphosphate. A Mg(2+)-binding site is contributed by aspartate 444. Thiamine diphosphate contacts are provided by residues 445–446 (GS) and 471–476 (NNGYTI). 2 residues coordinate Mg(2+): asparagine 471 and glycine 473. Glutamate 477 is a binding site for pyruvate.

Belongs to the TPP enzyme family. Homotetramer. Mg(2+) serves as cofactor. Thiamine diphosphate is required as a cofactor.

Its subcellular location is the cytoplasm. It is found in the nucleus. The enzyme catalyses pyruvate + H(+) = acetaldehyde + CO2. The catalysed reaction is 3-methyl-2-oxobutanoate + H(+) = 2-methylpropanal + CO2. It carries out the reaction (S)-3-methyl-2-oxopentanoate + H(+) = 2-methylbutanal + CO2. It catalyses the reaction indole-3-pyruvate + H(+) = indole-3-acetaldehyde + CO2. The enzyme catalyses 3-phenylpyruvate + H(+) = 2-phenylacetaldehyde + CO2. The catalysed reaction is 2-oxobutanoate + H(+) = propanal + CO2. It carries out the reaction 2-oxopentanoate + H(+) = butanal + CO2. It catalyses the reaction 2 acetaldehyde = acetoin. The enzyme catalyses acetaldehyde + pyruvate + H(+) = acetoin + CO2. Its pathway is fermentation; ethanol fermentation. It functions in the pathway amino-acid degradation; Ehrlich pathway. Its activity is regulated as follows. Allosterically activated by its substrate, pyruvate. Second most abundant of three pyruvate decarboxylases (PDC1, PDC5, PDC6) implicated in the nonoxidative conversion of pyruvate to acetaldehyde and carbon dioxide during alcoholic fermentation. Most of the produced acetaldehyde is subsequently reduced to ethanol, but some is required for cytosolic acetyl-CoA production for biosynthetic pathways. The enzyme is also one of five 2-oxo acid decarboxylases (PDC1, PDC5, PDC6, ARO10, and THI3) able to decarboxylate more complex 2-oxo acids (alpha-keto-acids) than pyruvate, which seem mainly involved in amino acid catabolism. Here the enzyme catalyzes the decarboxylation of amino acids, which, in a first step, have been transaminated to the corresponding 2-oxo acids. In a third step, the resulting aldehydes are reduced to alcohols, collectively referred to as fusel oils or alcohols. Its preferred substrates are the transaminated amino acids derived from threonine (2-oxobutanoate), norvaline (2-oxopentanoate), valine (3-methyl-2-oxobutanoate, also alpha-keto-isovalerate), isoleucine ((3S)-3-methyl-2-oxopentanoate, also alpha-keto-beta-methylvalerate), phenylalanine (phenylpyruvate), and tryptophan (3-(indol-3-yl)pyruvate), whereas transaminated leucine is no substrate. In a side-reaction the carbanionic intermediate (or active aldehyde) generated by decarboxylation or by activation of an aldehyde can react with an aldehyde via condensation (or carboligation) yielding a 2-hydroxy ketone, collectively called acyloins. This Saccharomyces cerevisiae (strain ATCC 204508 / S288c) (Baker's yeast) protein is Pyruvate decarboxylase isozyme 2 (PDC5).